A 1959-amino-acid polypeptide reads, in one-letter code: Sodium channel protein type 10 subunit alpha (1959 aa).

Residues 1–125 are Cytoplasmic-facing; sequence MEFPIGSVGT…FNLIRRTAIK (125 aa). The disordered stretch occupies residues 30–53; it reads AHGAAKKARAKHGERKGQDEKPRP. A compositionally biased stretch (basic residues) spans 33–43; it reads AAKKARAKHGE. Residues 44–53 show a composition bias toward basic and acidic residues; it reads RKGQDEKPRP. Residues 116–404 form an I repeat; the sequence is FNLIRRTAIK…VTMAYEEQNQ (289 aa). Residues 126–149 form a helical membrane-spanning segment; the sequence is VSVHAWFSIFITITILFNCVCMTQ. Residues 150–154 are Extracellular-facing; sequence NDLPE. The chain crosses the membrane as a helical span at residues 155–174; it reads KIEYAFTVIYTFEALIKILA. Residues 175 to 187 are Cytoplasmic-facing; the sequence is RGFCLNEFTYLRD. A helical membrane pass occupies residues 188 to 206; sequence PWNWLDFSVITLAYVGAAI. The Extracellular segment spans residues 207–212; it reads DLRGIS. Residues 213–232 traverse the membrane as a helical; Voltage-sensor segment; sequence GLRTFRVLRALKTVSVIPGL. The Cytoplasmic segment spans residues 233-248; that stretch reads KVIVGALIHSVRKLAD. A helical membrane pass occupies residues 249–272; it reads VTILTVFCLSVFALVGLQLFKGNL. At 273 to 340 the chain is on the extracellular side; the sequence is KNKCIKRSTD…PDFNYTSFDS (68 aa). C276 and C318 are oxidised to a cystine. N-linked (GlcNAc...) asparagine glycosylation is found at N288, N311, and N334. The pore-forming intramembrane region spans 341–365; that stretch reads FAWAFLSLFRLMTQDSWERLYQQTL. The Extracellular portion of the chain corresponds to 366 to 372; sequence RASGKMY. A helical membrane pass occupies residues 373 to 398; it reads MVFFVLVIFLGSFYLVNLILAVVTMA. Topologically, residues 399 to 659 are cytoplasmic; it reads YEEQNQATIA…KWMKFKMVLF (261 aa). S440, S443, S466, and S478 each carry phosphoserine. Disordered regions lie at residues 442 to 484 and 510 to 578; these read HSHN…YNQR and SQDV…ELTT. Residues 475–484 show a composition bias toward polar residues; sequence SPQSDPYNQR. The segment covering 523–533 has biased composition (basic and acidic residues); that stretch reads GVFHGDHESHR. 2 positions are modified to phosphoserine: S612 and S615. The stretch at 647–911 is one II repeat; that stretch reads CCPKWMKFKM…EDDGEVNNLQ (265 aa). Residues 660–684 traverse the membrane as a helical segment; sequence ELVTDPFAELTITLCIVVNTIFMAM. At 685-695 the chain is on the extracellular side; that stretch reads EHYPMTDAFDA. The chain crosses the membrane as a helical span at residues 696 to 719; it reads MLQAGNIVFTVFFTMEMAFKIIAF. Residues 720–727 are Cytoplasmic-facing; sequence DPYYYFQK. The helical transmembrane segment at 728 to 747 threads the bilayer; sequence KWNVFDCVIVTVSLLELSIA. Over 748 to 753 the chain is Extracellular; it reads KKGSLS. The helical; Voltage-sensor transmembrane segment at 754–773 threads the bilayer; the sequence is VLRTFRLLRVFKLAKSWPTL. The Cytoplasmic segment spans residues 774-789; it reads NTLIKIIGNSVGALGN. The helical transmembrane segment at 790-810 threads the bilayer; that stretch reads LTFILAIIVFIFALVGKQLLG. Residues 811-834 lie on the Extracellular side of the membrane; the sequence is EDYGCRKDGTALWNEGQLRWHMCD. An intramembrane region (pore-forming) is located at residues 835 to 855; that stretch reads FFHSFLVIFRILCGEWIENMW. The Extracellular segment spans residues 856-864; that stretch reads VCMQVSEKS. A disulfide bond links C857 and C866. A helical transmembrane segment spans residues 865–890; sequence ICLILFLTVMVLGNLVVLNLFIALLL. Residues 891–1149 lie on the Cytoplasmic side of the membrane; the sequence is NSFSADNLTA…GWQVRKTCYR (259 aa). Residues 1004–1016 show a composition bias toward acidic residues; sequence GESDLDELEEDIE. Disordered stretches follow at residues 1004-1034 and 1071-1097; these read GESD…QQDQ and ATPQ…PDPE. One copy of the III repeat lies at 1142 to 1451; sequence QVRKTCYRIV…KKYYNAMKKL (310 aa). A helical membrane pass occupies residues 1150 to 1173; it reads IVEHSWFESFIIFMILLSSGALAF. The Extracellular segment spans residues 1174 to 1186; it reads EDNYLEQKPRVKS. The helical transmembrane segment at 1187-1212 threads the bilayer; the sequence is MLEYTDRVFTFIFVFEMLLKWVAYGF. Residues 1213-1218 lie on the Cytoplasmic side of the membrane; that stretch reads KKYFTN. Residues 1219–1240 traverse the membrane as a helical segment; sequence AWCWLDFLIVNISLTSLIAKIL. Residues 1241–1244 lie on the Extracellular side of the membrane; sequence DYSD. A helical; Voltage-sensor transmembrane segment spans residues 1245-1266; sequence VASLKALRTLRALRPLRALSRF. Residues 1267 to 1285 are Cytoplasmic-facing; that stretch reads EGMRVVVDALVGAIPSIMN. Residues 1286 to 1313 traverse the membrane as a helical segment; sequence VLLVCLIFWLIFSIMGVNLFAGKFSRCI. Residues 1314–1355 lie on the Extracellular side of the membrane; sequence DTSNNPFSVVNSTIVNNKSECRNQNHTGHFFWVNVKVNFDNV. Positions 1356–1377 form an intramembrane region, pore-forming; sequence AMGYLALLQVATFKGWMDIMYA. Topologically, residues 1378 to 1393 are extracellular; that stretch reads AVDSREINSQPQWEDN. Residues 1394-1420 traverse the membrane as a helical segment; sequence LYMYLYFVVFIIFGGFFTLNLFVGVII. The Cytoplasmic segment spans residues 1421-1473; that stretch reads DNFNQQKKKLGGQDIFMTEEQKKYYNAMKKLGSKKPQKPIPRPLNKYQGFVFD. S1453 is subject to Phosphoserine; by PKC. One copy of the IV repeat lies at 1460 to 1759; the sequence is IPRPLNKYQG…WEKFDPEATQ (300 aa). The chain crosses the membrane as a helical span at residues 1474 to 1497; it reads IVTRQAFDIIIMVLICLNMITMMV. At 1498-1508 the chain is on the extracellular side; sequence ETDGQSEEKTK. Residues 1509–1532 traverse the membrane as a helical segment; it reads ILGRINQFFVAVFTGECVMKMFAL. Topologically, residues 1533 to 1538 are cytoplasmic; it reads RQYYFT. Residues 1539–1562 form a helical membrane-spanning segment; it reads NGWNVFDFIVVILSIGSLVFSAIL. Over 1563–1574 the chain is Extracellular; the sequence is KSLESYFSPTLF. The chain crosses the membrane as a helical; Voltage-sensor span at residues 1575 to 1596; sequence RVIRLARIGRILRLIRAAKGIR. Residues 1597–1611 lie on the Cytoplasmic side of the membrane; sequence TLLFALMMSLPALFN. A helical transmembrane segment spans residues 1612–1634; sequence IGLLLFLVMFIYSIFGMASFANV. The Extracellular segment spans residues 1635-1648; it reads VEEAGIDDMFNFQT. An intramembrane region (pore-forming) is located at residues 1649 to 1671; sequence FGNSMLCLFQITTSAGWDGLLSP. Residues 1672–1699 are Extracellular-facing; the sequence is ILNTGPPYCDPNLSNNNTSKGNCGSPTV. A helical membrane pass occupies residues 1700–1724; sequence GIVFFTTYIIISFLIVVNMYIAVIL. At 1725–1959 the chain is on the cytoplasmic side; that stretch reads ENFNVATEES…SKEGDSPGPQ (235 aa). The region spanning 1853-1882 is the IQ domain; it reads EDISATVIQKAYRSYVLQRSLTLSNPLRVP. Residues 1901 to 1959 form a disordered region; sequence ANDSGRLPDKSETTSATSFPPSYDSVTRGLSDRVNISTSNSMHNEDEVTSKEGDSPGPQ. A compositionally biased stretch (basic and acidic residues) spans 1943–1959; it reads HNEDEVTSKEGDSPGPQ.

This sequence belongs to the sodium channel (TC 1.A.1.10) family. Nav1.8/SCN10A subfamily. The channel consists of an ion conducting pore forming alpha-subunit regulated by one or more associated auxiliary subunits SCN1B, SCN2B and SCN3B; electrophysiological properties may vary depending on the type of the associated beta subunits. Found in a number of complexes with PRX, DYNLT1 and PDZD2. Interacts with proteins such as FSTL1, PRX, DYNLT1, PDZD2, S100A10 and many others. Interacts with NEDD4 and NEDD4L. Post-translationally, ubiquitinated by NEDD4L; which promotes its endocytosis. Phosphorylation at Ser-1453 by PKC in a highly conserved cytoplasmic loop slows inactivation of the sodium channel and reduces peak sodium currents. In terms of processing, lacks the cysteine which covalently binds the conotoxin GVIIJ. This cysteine (position 816) is speculated in other sodium channel subunits alpha to be implied in covalent binding with the sodium channel subunit beta-2 or beta-4.

The protein resides in the cell membrane. It carries out the reaction Na(+)(in) = Na(+)(out). Its function is as follows. Tetrodotoxin-resistant channel that mediates the voltage-dependent sodium ion permeability of excitable membranes. Assuming opened or closed conformations in response to the voltage difference across the membrane, the protein forms a sodium-selective channel through which sodium ions may pass in accordance with their electrochemical gradient. Plays a role in neuropathic pain mechanisms. In Onychomys torridus (Southern grasshopper mouse), this protein is Sodium channel protein type 10 subunit alpha (Scn10a).